We begin with the raw amino-acid sequence, 239 residues long: Uridylate kinase (239 aa).

13–16 lines the ATP pocket; the sequence is KVSG. Gly-55 lines the UMP pocket. The ATP site is built by Gly-56 and Arg-60. UMP-binding positions include Asp-75 and 136–143; that span reads TGNPFFTT. Residues Thr-163, Gln-164, Tyr-169, and Asp-172 each contribute to the ATP site.

Belongs to the UMP kinase family. As to quaternary structure, homohexamer.

The protein resides in the cytoplasm. The enzyme catalyses UMP + ATP = UDP + ADP. Its pathway is pyrimidine metabolism; CTP biosynthesis via de novo pathway; UDP from UMP (UMPK route): step 1/1. Its activity is regulated as follows. Inhibited by UTP. Its function is as follows. Catalyzes the reversible phosphorylation of UMP to UDP. In Bartonella henselae (strain ATCC 49882 / DSM 28221 / CCUG 30454 / Houston 1) (Rochalimaea henselae), this protein is Uridylate kinase.